A 255-amino-acid chain; its full sequence is Formate hydrogenlyase subunit 7 (255 aa).

Residues Cys-45, Cys-51, Cys-115, and Cys-145 each contribute to the [4Fe-4S] cluster site.

This sequence belongs to the complex I 20 kDa subunit family. In terms of assembly, FHL comprises of a formate dehydrogenase, unidentified electron carriers and a hydrogenase (isoenzyme 3). In this non-energy conserving pathway molecular hydrogen and carbodioxide from formate are released. The cofactor is [4Fe-4S] cluster.

The polypeptide is Formate hydrogenlyase subunit 7 (hycG) (Escherichia coli (strain K12)).